The primary structure comprises 456 residues: Peripherin (456 aa).

Residues 1–14 show a composition bias toward polar residues; that stretch reads MSHSGLRSTSTSYR. Residues 1–55 form a disordered region; it reads MSHSGLRSTSTSYRRTLGSSPVPSSYSSSSRLSTSRHFGSPSPGPSSRSSSSAFR. The head stretch occupies residues 1-90; it reads MSHSGLRSTS…FLTTRSNEKA (90 aa). A compositionally biased stretch (low complexity) spans 16-55; sequence TLGSSPVPSSYSSSSRLSTSRHFGSPSPGPSSRSSSSAFR. The IF rod domain occupies 88 to 397; that stretch reads EKAELQELND…KLLEGEESRI (310 aa). A coil 1A region spans residues 91–123; sequence ELQELNDRFASFIEKVRYLEQQNAVLVTEINQA. Residues 124–134 form a linker 1 region; it reads RSKEPTRASDL. Residues 135–230 form a coil 1B region; it reads CQQELRELRK…KLHEEELNDV (96 aa). A linker 2 region spans residues 231 to 252; sequence QVSVQAQPVHMEIEAAKQPDLT. Residues 253–395 are coil 2; it reads SALRDIRSQY…YRKLLEGEES (143 aa). A tail region spans residues 396–456; sequence RIAVPIHSLT…RKEQSSEGEK (61 aa). Residues 411-456 form a disordered region; sequence SPAAPEIDPSTETHTRKTVAIKTIETRDGEQVVTESRKEQSSEGEK. Residues 434-456 are compositionally biased toward basic and acidic residues; it reads IETRDGEQVVTESRKEQSSEGEK.

It belongs to the intermediate filament family. Forms homodimers (in vitro). Homopolymerizes into a filamentous network (in vitro).

The protein resides in the cytoplasm. The protein localises to the cytoskeleton. It localises to the cell projection. It is found in the axon. Its subcellular location is the perikaryon. In terms of biological role, class-III neuronal intermediate filament protein. My form an independent structural network without the involvement of other neurofilaments or may cooperate with other neuronal intermediate filament proteins to form a filamentous network. In Xenopus laevis (African clawed frog), this protein is Peripherin (prph).